A 283-amino-acid chain; its full sequence is DNA repair protein RecO (283 aa).

It belongs to the RecO family.

Its function is as follows. Involved in DNA repair and RecF pathway recombination. This Gloeothece citriformis (strain PCC 7424) (Cyanothece sp. (strain PCC 7424)) protein is DNA repair protein RecO.